A 157-amino-acid polypeptide reads, in one-letter code: MRILGIDPGSRKCGYAIISHASNKLSLITAGFINITTTRLQEQILDLIEALDCLLDRYEVNEVAIEDIFFGYNPKSVIKLAQFRGALSLKILERIGNFSEYTPLQVKKALTGNGKAAKEQVAFMVKRLLNITSEIKPLDISDAIAVAITHAQRLKLH.

Active-site residues include Asp-7, Glu-66, and Asp-139. Mg(2+)-binding residues include Asp-7, Glu-66, and Asp-139.

It belongs to the RuvC family. Homodimer which binds Holliday junction (HJ) DNA. The HJ becomes 2-fold symmetrical on binding to RuvC with unstacked arms; it has a different conformation from HJ DNA in complex with RuvA. In the full resolvosome a probable DNA-RuvA(4)-RuvB(12)-RuvC(2) complex forms which resolves the HJ. The cofactor is Mg(2+).

The protein localises to the cytoplasm. The catalysed reaction is Endonucleolytic cleavage at a junction such as a reciprocal single-stranded crossover between two homologous DNA duplexes (Holliday junction).. Its function is as follows. The RuvA-RuvB-RuvC complex processes Holliday junction (HJ) DNA during genetic recombination and DNA repair. Endonuclease that resolves HJ intermediates. Cleaves cruciform DNA by making single-stranded nicks across the HJ at symmetrical positions within the homologous arms, yielding a 5'-phosphate and a 3'-hydroxyl group; requires a central core of homology in the junction. The consensus cleavage sequence is 5'-(A/T)TT(C/G)-3'. Cleavage occurs on the 3'-side of the TT dinucleotide at the point of strand exchange. HJ branch migration catalyzed by RuvA-RuvB allows RuvC to scan DNA until it finds its consensus sequence, where it cleaves and resolves the cruciform DNA. The sequence is that of Crossover junction endodeoxyribonuclease RuvC from Helicobacter pylori (strain ATCC 700392 / 26695) (Campylobacter pylori).